Here is a 200-residue protein sequence, read N- to C-terminus: Membrane-spanning 4-domains subfamily A member 5 (200 aa).

At 1 to 52 (MDSSTAHSPVFLVFPPEITASEYESTELSATTFSTQSPLQKLFARKMKILGT) the chain is on the cytoplasmic side. A helical transmembrane segment spans residues 53 to 73 (IQILFGIMTFSFGVIFLFTLL). Topologically, residues 74 to 80 (KPYPRFP) are extracellular. Residues 81-101 (FIFLSGYPFWGSVLFINSGAF) form a helical membrane-spanning segment. Over 102 to 120 (LIAVKRKTTETLIILSRIM) the chain is Cytoplasmic. The chain crosses the membrane as a helical span at residues 121–141 (NFLSALGAIAGIILLTFGFIL). Over 142–159 (DQNYICGYSHQNSQCKAV) the chain is Extracellular. A helical membrane pass occupies residues 160–180 (TVLFLGILITLMTFSIIELFI). Topologically, residues 181–200 (SLPFSILGCHSEDCDCEQCC) are cytoplasmic.

It belongs to the MS4A family. In terms of tissue distribution, expressed at high level in the testis. Detected also in the pancreas, heart and in the brain.

The protein resides in the membrane. In terms of biological role, may be involved in signal transduction as a component of a multimeric receptor complex. The sequence is that of Membrane-spanning 4-domains subfamily A member 5 (MS4A5) from Homo sapiens (Human).